A 267-amino-acid chain; its full sequence is Hydroxyethylthiazole kinase (267 aa).

Met46 serves as a coordination point for substrate. 2 residues coordinate ATP: Arg121 and Thr167. A substrate-binding site is contributed by Ala194.

Belongs to the Thz kinase family. Requires Mg(2+) as cofactor.

The catalysed reaction is 5-(2-hydroxyethyl)-4-methylthiazole + ATP = 4-methyl-5-(2-phosphooxyethyl)-thiazole + ADP + H(+). Its pathway is cofactor biosynthesis; thiamine diphosphate biosynthesis; 4-methyl-5-(2-phosphoethyl)-thiazole from 5-(2-hydroxyethyl)-4-methylthiazole: step 1/1. Functionally, catalyzes the phosphorylation of the hydroxyl group of 4-methyl-5-beta-hydroxyethylthiazole (THZ). The protein is Hydroxyethylthiazole kinase of Rhizobium leguminosarum bv. trifolii (strain WSM2304).